Consider the following 862-residue polypeptide: Short transient receptor potential channel 7 (862 aa).

Residues 1–21 form a disordered region; it reads MLRNSTFKNMQRRHTTLREKG. Residues 1–351 are Cytoplasmic-facing; that stretch reads MLRNSTFKNM…GLRQQSIAVK (351 aa). Over residues 10-21 the composition is skewed to basic residues; that stretch reads MQRRHTTLREKG. Residue T15 is modified to Phosphothreonine; by PKG/PRKG1. ANK repeat units lie at residues 42 to 71, 77 to 106, 108 to 134, and 163 to 192; these read PEEE…TLNF, MGQN…LARV, DALL…FAQG, and HDIT…RIER. Residues 352–372 form a helical membrane-spanning segment; it reads FLAVFGVSIGLPFLAIAYWIA. At 373-383 the chain is on the extracellular side; it reads PCSKLGRTLRS. The helical transmembrane segment at 384 to 404 threads the bilayer; it reads PFMKFVAHAVSFTIFLGLLVV. Residues 405 to 465 lie on the Cytoplasmic side of the membrane; sequence NASDRFEGVK…KEIWEEGPRE (61 aa). Residues 466–486 form a helical membrane-spanning segment; the sequence is YVLHLWNLLDFGMLSIFVASF. Residues 487-537 are Extracellular-facing; that stretch reads TARFMAFLKATEAQLYVDQHVQDDTLHNVSLPPEVAYFTYARDKWWPSDPQ. An N-linked (GlcNAc...) asparagine glycan is attached at N514. A helical transmembrane segment spans residues 538–558; the sequence is IISEGLYAIAVVLSFSRIAYI. Topologically, residues 559–581 are cytoplasmic; the sequence is LPANESFGPLQISLGRTVKDIFK. Residues 582–602 form a helical membrane-spanning segment; the sequence is FMVIFIMVFVAFMIGMFNLYS. The Extracellular portion of the chain corresponds to 603–651; it reads YYRGAKYNPAFTTVEESFKTLFWSIFGLSEVISVVLKYDHKFIENIGYV. Residues 652–672 traverse the membrane as a helical segment; sequence LYGVYNVTMVVVLLNMLIAMI. The Cytoplasmic portion of the chain corresponds to 673-862; sequence NNSYQEIEED…HLRVNKGKDI (190 aa).

The protein belongs to the transient receptor (TC 1.A.4) family. STrpC subfamily. TRPC7 sub-subfamily. As to quaternary structure, interacts with MX1 and RNF24. Interacts (via ANK-repeat domains) with PRKG1. Post-translationally, phosphorylation by PRKG1 at Thr-15 negatively regulates TRPC7 activity.

The protein resides in the cell membrane. Its subcellular location is the nucleus envelope. It catalyses the reaction Ca(2+)(in) = Ca(2+)(out). Forms a receptor-activated non-selective calcium permeant cation channel. Probably is operated by a phosphatidylinositol second messenger system activated by receptor tyrosine kinases or G-protein coupled receptors. Activated by diacylglycerol (DAG). May also be activated by intracellular calcium store depletion. This chain is Short transient receptor potential channel 7 (TRPC7), found in Homo sapiens (Human).